The sequence spans 82 residues: Delta-actitoxin-Aeq2a (82 aa).

The first 19 residues, 1-19 (MNRLMILVFAAVFLALASA), serve as a signal peptide directing secretion. A propeptide spanning residues 20-26 (DEDVDIA) is cleaved from the precursor. Intrachain disulfides connect Cys32–Cys79, Cys34–Cys69, and Cys62–Cys80.

It belongs to the sea anemone sodium channel inhibitory toxin family. Type I subfamily.

The protein localises to the secreted. The protein resides in the nematocyst. Its function is as follows. Binds specifically to voltage-gated sodium channels (Nav), thereby delaying their inactivation during signal transduction. Causes death to crabs (minimum lethal dose of 25 ug/kg) and mice. This is Delta-actitoxin-Aeq2a from Actinia equina (Beadlet anemone).